An 829-amino-acid chain; its full sequence is Genome polyprotein (829 aa).

The residue at position 2 (S2) is an N-acetylserine; by host. An interaction with STAT1 region spans residues 2–23; it reads STNPKPQRKTKRNTNRRPQDVK. Positions 2-58 are interaction with EIF2AK2/PKR; the sequence is STNPKPQRKTKRNTNRRPQDVKFPGGGQIVGGVYLLPRRGPRLGVRATRKTSERSQP. The interaction with DDX3X stretch occupies residues 2 to 59; that stretch reads STNPKPQRKTKRNTNRRPQDVKFPGGGQIVGGVYLLPRRGPRLGVRATRKTSERSQPR. Residues 2-75 form a disordered region; it reads STNPKPQRKT…PKARRPKGRN (74 aa). Residues 2 to 168 lie on the Cytoplasmic side of the membrane; sequence STNPKPQRKT…EDGVNYATGN (167 aa). 2 short sequence motifs (nuclear localization signal) span residues 5 to 13 and 38 to 43; these read PKPQRKTKR and PRRGPR. A compositionally biased stretch (basic residues) spans 7–16; sequence PQRKTKRNTN. Positions 32 to 47 are enriched in low complexity; sequence GGVYLLPRRGPRLGVR. Position 53 is a phosphoserine; by host (S53). Short sequence motifs (nuclear localization signal) lie at residues 58–64 and 66–71; these read PRGRRQP and PKARRP. Positions 58–73 are enriched in basic residues; the sequence is PRGRRQPIPKARRPKG. At S99 the chain carries Phosphoserine; by host. Residues 112-152 are important for endoplasmic reticulum and mitochondrial localization; sequence PRRRSRNLGKVIDTLTCGFVDLMGYIPLVGAPLRGAARALA. The residue at position 116 (S116) is a Phosphoserine; by host PKA. Residues 122–173 form an interaction with APOA2 region; it reads VIDTLTCGFVDLMGYIPLVGAPLRGAARALAHGVRVLEDGVNYATGNLPGCS. The interval 164-167 is important for lipid droplets localization; sequence YATG. A helical membrane pass occupies residues 169 to 189; the sequence is LPGCSFSIFLLALLSCLTVPA. Residues 178 to 191 constitute a propeptide, ER anchor for the core protein, removed in mature form by host signal peptidase; that stretch reads LLALLSCLTVPASA. At 190–358 the chain is on the lumenal side; it reads SAYQVRNSTG…AGAHWGVLAG (169 aa). N196, N209, and N234 each carry an N-linked (GlcNAc...) asparagine; by host glycan. The segment at 265–296 is important for fusion; that stretch reads LVGSATLCSALYVGDLCGSVFLVGQLFTFSPR. N305 carries an N-linked (GlcNAc...) asparagine; by host glycan. A helical membrane pass occupies residues 359–379; the sequence is MAYFSMVGNWAKVLAVLLLFA. The Lumenal portion of the chain corresponds to 380-725; sequence GVDAETHVTG…WEYVVLLFLL (346 aa). Residues 385–411 form an HVR1 region; the sequence is THVTGGAAARSTLQLAGLFQPGAKQNV. N417, N423, N430, and N448 each carry an N-linked (GlcNAc...) (high mannose) asparagine; by host glycan. Disulfide bonds link C429–C552, C452–C459, C486–C494, and C503–C508. The HVR2 stretch occupies residues 474 to 479; the sequence is YAGGGG. Residues 480–493 form a CD81-binding 1 region; it reads PDHRPYCWHYPPKP. N-linked (GlcNAc...) asparagine; by host glycosylation is present at N540. The tract at residues 544–551 is CD81-binding 2; the sequence is PPLGNWFG. N556 carries N-linked (GlcNAc...) (high mannose) asparagine; by host glycosylation. C564 and C569 form a disulfide bridge. N576 is a glycosylation site (N-linked (GlcNAc...) (high mannose) asparagine; by host). Cystine bridges form between C581–C585, C597–C620, and C607–C644. N-linked (GlcNAc...) (high mannose) asparagine; by host glycans are attached at residues N623 and N645. C652 and C677 form a disulfide bridge. Positions 660–671 are PKR/eIF2-alpha phosphorylation homology domain (PePHD); the sequence is SELSPLLLSTTQ. A helical transmembrane segment spans residues 726 to 746; it reads LADARVCSCLWMMLLISQAEA. Over 747–757 the chain is Lumenal; that stretch reads ALENLVVLNAA. The helical transmembrane segment at 758-778 threads the bilayer; it reads SLAGTHGLVSFLVFFCFAWFL. The Cytoplasmic segment spans residues 779–781; that stretch reads RGK. Residues 782-803 form a helical membrane-spanning segment; sequence WVPGAVYALYGMWPLLLLLLAL. Topologically, residues 804-813 are lumenal; it reads PQRAYALDTE. A helical membrane pass occupies residues 814 to 829; that stretch reads VAASCGGVVLVGLMAL.

The protein belongs to the hepacivirus polyprotein family. In terms of assembly, homooligomer. Interacts with E1 (via C-terminus). Interacts with the non-structural protein 5A. Interacts (via N-terminus) with host STAT1 (via SH2 domain); this interaction results in decreased STAT1 phosphorylation and ubiquitin-mediated proteasome-dependent STAT1 degradation, leading to decreased IFN-stimulated gene transcription. Interacts with host STAT3; this interaction constitutively activates STAT3. Interacts with host LTBR receptor. Interacts with host TNFRSF1A receptor and possibly induces apoptosis. Interacts with host HNRPK. Interacts with host YWHAE. Interacts with host UBE3A/E6AP. Interacts with host DDX3X. Interacts with host APOA2. Interacts with host RXRA protein. Interacts with host SP110 isoform 3/Sp110b; this interaction sequesters the transcriptional corepressor SP110 away from the nucleus. Interacts with host CREB3 nuclear transcription protein; this interaction triggers cell transformation. Interacts with host ACY3. Interacts with host C1QR1. Interacts with host RBM24; this interaction, which enhances the interaction of the mature core protein with 5'-UTR, may inhibit viral translation and favor replication. Interacts with host EIF2AK2/PKR; this interaction induces the autophosphorylation of EIF2AK2. Part of the viral assembly initiation complex composed of NS2, E1, E2, NS3, NS4A, NS5A and the mature core protein. Forms a heterodimer with envelope glycoprotein E2. Interacts with mature core protein. Interacts with protease NS2. The heterodimer E1/E2 interacts with host CLDN1; this interaction plays a role in viral entry into host cell. Interacts with host SPSB2 (via C-terminus). Part of the viral assembly initiation complex composed of NS2, E1, E2, NS3, NS4A, NS5A and the mature core protein. As to quaternary structure, forms a heterodimer with envelope glycoprotein E1. Interacts with host CD81 and SCARB1 receptors; these interactions play a role in viral entry into host cell. Interacts with host EIF2AK2/PKR; this interaction inhibits EIF2AK2 and probably allows the virus to evade the innate immune response. Interacts with host CD209/DC-SIGN and CLEC4M/DC-SIGNR. Interact with host SPCS1; this interaction is essential for viral particle assembly. Interacts with protease NS2. The heterodimer E1/E2 interacts with host CLDN1; this interaction plays a role in viral entry into host cell. Part of the viral assembly initiation complex composed of NS2, E1, E2, NS3, NS4A, NS5A and the mature core protein. In terms of assembly, homohexamer. Homoheptamer. Interacts with protease NS2. Homodimer. Interacts with host SPCS1; this interaction is essential for viral particle assembly. Interacts with envelope glycoprotein E1. Interacts with envelope glycoprotein E2. Interacts with viroporin p7. Interacts with serine protease/helicase NS3. Part of the replication complex composed of NS2, NS3, NS4A, NS4B, NS5A and the RNA-directed RNA polymerase embedded in an ER-derived membranous web. Part of the viral assembly initiation complex composed of NS2, E1, E2, NS3, NS4A, NS5A and the mature core protein. The cofactor is Zn(2+). In terms of processing, specific enzymatic cleavages in vivo yield mature proteins. The structural proteins, core, E1, E2 and p7 are produced by proteolytic processing by host signal peptidases. The core protein precursor is synthesized as a 23 kDa, which is retained in the ER membrane through the hydrophobic signal peptide. Cleavage by the signal peptidase releases the 21 kDa mature core protein. The cleavage of the core protein precursor occurs between aminoacids 176 and 188 but the exact cleavage site is not known. Some degraded forms of the core protein appear as well during the course of infection. The other proteins (p7, NS2, NS3, NS4A, NS4B, NS5A and NS5B) are cleaved by the viral proteases. Autoprocessing between NS2 and NS3 is mediated by the NS2 cysteine protease catalytic domain and regulated by the NS3 N-terminal domain. Post-translationally, phosphorylated by host PKC and PKA. Ubiquitinated; mediated by UBE3A and leading to core protein subsequent proteasomal degradation. In terms of processing, highly N-glycosylated. Post-translationally, palmitoylation is required for NS2/3 autoprocessing and E2 recruitment to membranes.

It is found in the host endoplasmic reticulum membrane. Its subcellular location is the host mitochondrion membrane. It localises to the virion. The protein resides in the host cytoplasm. The protein localises to the host nucleus. It is found in the host lipid droplet. Its subcellular location is the virion membrane. It localises to the host mitochondrion. The protein resides in the host cell membrane. Its activity is regulated as follows. Inhibited by the antiviral drug hexamethylene amiloride. Inhibition by amantadine appears to be genotype-dependent. Also inhibited by long-alkyl-chain iminosugar derivatives. Packages viral RNA to form a viral nucleocapsid, and promotes virion budding. Participates in the viral particle production as a result of its interaction with the non-structural protein 5A. Binds RNA and may function as a RNA chaperone to induce the RNA structural rearrangements taking place during virus replication. Modulates viral translation initiation by interacting with viral IRES and 40S ribosomal subunit. Affects various cell signaling pathways, host immunity and lipid metabolism. Prevents the establishment of cellular antiviral state by blocking the interferon-alpha/beta (IFN-alpha/beta) and IFN-gamma signaling pathways and by blocking the formation of phosphorylated STAT1 and promoting ubiquitin-mediated proteasome-dependent degradation of STAT1. Activates STAT3 leading to cellular transformation. Regulates the activity of cellular genes, including c-myc and c-fos. May repress the promoter of p53, and sequester CREB3 and SP110 isoform 3/Sp110b in the cytoplasm. Represses cell cycle negative regulating factor CDKN1A, thereby interrupting an important check point of normal cell cycle regulation. Targets transcription factors involved in the regulation of inflammatory responses and in the immune response: suppresses TNF-induced NF-kappa-B activation, and activates AP-1. Binds to dendritic cells (DCs) via C1QR1, resulting in down-regulation of T-lymphocytes proliferation. Alters lipid metabolism by interacting with hepatocellular proteins involved in lipid accumulation and storage. Induces up-regulation of FAS promoter activity, and thereby contributes to the increased triglyceride accumulation in hepatocytes (steatosis). Its function is as follows. Forms a heterodimer with envelope glycoprotein E2, which mediates virus attachment to the host cell, virion internalization through clathrin-dependent endocytosis and fusion with host membrane. Fusion with the host cell is most likely mediated by both E1 and E2, through conformational rearrangements of the heterodimer required for fusion rather than a classical class II fusion mechanism. E1/E2 heterodimer binds host apolipoproteins such as APOB and ApoE thereby forming a lipo-viro-particle (LVP). APOE associated to the LVP allows the initial virus attachment to cell surface receptors such as the heparan sulfate proteoglycans (HSPGs), syndecan-1 (SDC1), syndecan-1 (SDC2), the low-density lipoprotein receptor (LDLR) and scavenger receptor class B type I (SCARB1). The cholesterol transfer activity of SCARB1 allows E2 exposure and binding of E2 to SCARB1 and the tetraspanin CD81. E1/E2 heterodimer binding on CD81 activates the epithelial growth factor receptor (EGFR) signaling pathway. Diffusion of the complex E1-E2-EGFR-SCARB1-CD81 to the cell lateral membrane allows further interaction with Claudin 1 (CLDN1) and occludin (OCLN) to finally trigger HCV entry. In terms of biological role, forms a heterodimer with envelope glycoprotein E1, which mediates virus attachment to the host cell, virion internalization through clathrin-dependent endocytosis and fusion with host membrane. Fusion with the host cell is most likely mediated by both E1 and E2, through conformational rearrangements of the heterodimer required for fusion rather than a classical class II fusion mechanism. The interaction between envelope glycoprotein E2 and host apolipoprotein E/APOE allows the proper assembly, maturation and infectivity of the viral particles. This interaction is probably promoted via the up-regulation of cellular autophagy by the virus. E1/E2 heterodimer binds host apolipoproteins such as APOB and APOE thereby forming a lipo-viro-particle (LVP). APOE associated to the LVP allows the initial virus attachment to cell surface receptors such as the heparan sulfate proteoglycans (HSPGs), syndecan-1 (SDC1), syndecan-1 (SDC2), the low-density lipoprotein receptor (LDLR) and scavenger receptor class B type I (SCARB1). The cholesterol transfer activity of SCARB1 allows E2 exposure and binding of E2 to SCARB1 and the tetraspanin CD81. E1/E2 heterodimer binding on CD81 activates the epithelial growth factor receptor (EGFR) signaling pathway. Diffusion of the complex E1-E2-EGFR-SCARB1-CD81 to the cell lateral membrane allows further interaction with Claudin 1 (CLDN1) and occludin (OCLN) to finally trigger HCV entry. Inhibits host EIF2AK2/PKR activation, preventing the establishment of an antiviral state. Viral ligand for CD209/DC-SIGN and CLEC4M/DC-SIGNR, which are respectively found on dendritic cells (DCs), and on liver sinusoidal endothelial cells and macrophage-like cells of lymph node sinuses. These interactions allow the capture of circulating HCV particles by these cells and subsequent facilitated transmission to permissive cells such as hepatocytes and lymphocyte subpopulations. Functionally, ion channel protein that acts as a viroporin and plays an essential role in the assembly, envelopment and secretion of viral particles. Regulates the host cell secretory pathway, which induces the intracellular retention of viral glycoproteins and favors assembly of viral particles. Creates a pore in acidic organelles and releases Ca(2+) and H(+) in the cytoplasm of infected cells, leading to a productive viral infection. High levels of cytoplasmic Ca(2+) may trigger membrane trafficking and transport of viral ER-associated proteins to viroplasms, sites of viral genome replication. This ionic imbalance induces the assembly of the inflammasome complex, which triggers the maturation of pro-IL-1beta into IL-1beta through the action of caspase-1. Targets also host mitochondria and induces mitochondrial depolarization. In addition of its role as a viroporin, acts as a lipid raft adhesion factor. Cysteine protease required for the proteolytic auto-cleavage between the non-structural proteins NS2 and NS3. The N-terminus of NS3 is required for the function of NS2 protease (active region NS2-3). Promotes the initiation of viral particle assembly by mediating the interaction between structural and non-structural proteins. The polypeptide is Genome polyprotein (Hepatitis C virus (isolate Glasgow) (HCV)).